A 452-amino-acid chain; its full sequence is MKRSKYFGTDGIRGRVGLSPITPDFILKLGWAAGKVLSNYGSGRSKQVIIGKDTRISGYMLESALEAGLAASGLSAALTGPMPTPAIAYLTRTFRAEAGIVISASHNPFYDNGIKFFSIKGTKLDTQVEYFIETELNKCLKCIQPKLLGKAKRIIDAAGRYIEFCKGTFPAHLSLKKLRIVVDCANGATYHIAPNVLRELGADVIAISCNPNGININNKCGSTDIRRLRTQVLLKKADLGIAYDGDGDRVIMVDHIGNKVDGDQMLYILAKEYLYQRKLHGGIVGTWMSNMGLALALRELNIPFVRANVGDRSVLLMLREKGWYIGGENSGHIVLLDKTTTGDGIIVALQILSTMVSNSVSLYELCNNVYLLPQILINVYCSGFINPLESSVVKKEIQIIKQELSDQGRILLRQSGTEPYIRVMVEGKHYSKISYLANRIVSVIKGEMRSVN.

S105 (phosphoserine intermediate) is an active-site residue. Positions 105, 244, 246, and 248 each coordinate Mg(2+). Position 105 is a phosphoserine (S105).

It belongs to the phosphohexose mutase family. Requires Mg(2+) as cofactor. In terms of processing, activated by phosphorylation.

The catalysed reaction is alpha-D-glucosamine 1-phosphate = D-glucosamine 6-phosphate. Its function is as follows. Catalyzes the conversion of glucosamine-6-phosphate to glucosamine-1-phosphate. This is Phosphoglucosamine mutase from Blochmanniella floridana.